A 168-amino-acid polypeptide reads, in one-letter code: MSQTVHFQGNPVTVANSIPQAGSKAQTFTLVAKDLSDVTLGQFAGKRKVLNIFPSIDTGVCAASVRKFNQLATEIDNTVVLCISADLPFAQSRFCGAEGLNNVITLSTFRNAEFLQAYGVAIADGPLKGLAARAVVVIDENDNVIFSQLVDEITTEPDYEAALAVLKA.

The Thioredoxin domain maps to Pro19–Ala168. Cys61 (cysteine sulfenic acid (-SOH) intermediate) is an active-site residue. Cys61 and Cys95 form a disulfide bridge.

This sequence belongs to the peroxiredoxin family. Tpx subfamily. In terms of assembly, homodimer.

The enzyme catalyses a hydroperoxide + [thioredoxin]-dithiol = an alcohol + [thioredoxin]-disulfide + H2O. In terms of biological role, thiol-specific peroxidase that catalyzes the reduction of hydrogen peroxide and organic hydroperoxides to water and alcohols, respectively. Plays a role in cell protection against oxidative stress by detoxifying peroxides. In Shigella dysenteriae, this protein is Thiol peroxidase.